Consider the following 147-residue polypeptide: UPF0310 protein in gntR 5'region (147 aa).

This sequence belongs to the UPF0310 family.

The chain is UPF0310 protein in gntR 5'region (oug) from Bacillus licheniformis.